We begin with the raw amino-acid sequence, 351 residues long: Transmembrane protein 115 (351 aa).

Over 1-19 (MQRALPGARQHLGAILSSA) the chain is Cytoplasmic. The segment at 1-205 (MQRALPGARQ…FGLISSWVYL (205 aa)) is mediates homooligomerization. A helical membrane pass occupies residues 20–40 (SVVVKALCAAVLFLYLLSFAV). The Lumenal portion of the chain corresponds to 41–97 (DTGCLAVTPGYLFPPNFWIWTLATHGLMEQHVWDVAISLATVVVAGRLLEPLWGALE). A helical membrane pass occupies residues 98-118 (LLIFFSVVNVSVGLLGAFAYL). Topologically, residues 119–126 (LTYMASFN) are cytoplasmic. Residues 127-147 (LVYLFTVRIHGALGFLGGVLV) form a helical membrane-spanning segment. Topologically, residues 148 to 165 (ALKQTMGDCVVLRVPQVR) are lumenal. The chain crosses the membrane as a helical span at residues 166–186 (VSVVPMLLLGLLLLLRLATLL). At 187 to 351 (QSPALASYGF…ITFEAAPPTL (165 aa)) the chain is on the cytoplasmic side. The interval 206-229 (RFYQRHSRGRGDMADHFAFATFFP) is mediates localization to the Golgi. The segment at 300–351 (DQSVWPSMDDDEEEAGAKVDSPMPSDKAPTLPGKGAVPESSLITFEAAPPTL) is disordered. At Thr329 the chain carries Phosphothreonine.

This sequence belongs to the TMEM115 family. As to quaternary structure, homooligomer. Interacts with COPB1. May interact with LMAN1. Interacts with the COG complex; probably through COG3.

It localises to the golgi apparatus. The protein resides in the golgi stack membrane. In terms of biological role, may play a role in retrograde transport of proteins from the Golgi to the endoplasmic reticulum. May indirectly play a role in protein glycosylation in the Golgi. The protein is Transmembrane protein 115 of Bos taurus (Bovine).